Here is an 863-residue protein sequence, read N- to C-terminus: Envelope glycoprotein gp160 (863 aa).

A signal peptide spans 1-32 (MIVTMKAMEKRNKKLWTLYLAMALITPCLSLR). The Extracellular portion of the chain corresponds to 33–684 (QLYATVYAGV…ITKWLWYIKI (652 aa)). Cys54 and Cys74 are disulfide-bonded. 2 N-linked (GlcNAc...) asparagine; by host glycosylation sites follow: Asn59 and Asn88. 5 disulfide bridges follow: Cys119–Cys201, Cys126–Cys192, Cys131–Cys146, Cys214–Cys243, and Cys224–Cys235. The segment at 131–145 (CTNIAGTTNENLMKK) is V1. A V2 region spans residues 146–192 (CEFNVTTVIKDKKEKKQALFYVSDLMELNETSSTNKTNSKMYTLTNC). 15 N-linked (GlcNAc...) asparagine; by host glycosylation sites follow: Asn149, Asn174, Asn180, Asn193, Asn225, Asn230, Asn237, Asn258, Asn285, Asn289, Asn320, Asn330, Asn350, Asn356, and Asn360. The tract at residues 292-326 (CERPQIDIQEMRIGPMAWYSMGIGGTAGNSSRAAY) is V3. Cys292 and Cys327 are oxidised to a cystine. Positions 362 to 372 (SSGGDLEVTHL) are CD4-binding loop. 2 disulfides stabilise this stretch: Cys376–Cys442 and Cys383–Cys415. Residues 383–415 (CNTAKMFNYTFSCNGTTCSVSNVSQGNNGTLPC) are V4. 8 N-linked (GlcNAc...) asparagine; by host glycosylation sites follow: Asn390, Asn396, Asn404, Asn410, Asn439, Asn445, Asn458, and Asn463. V5 regions lie at residues 458 to 469 (NSSNNNVTFRPI) and 460 to 469 (SNNNVTFRPI). A fusion peptide region spans residues 514–534 (AVGLGMLFLGVLSAAGSTMGA). The interval 576-594 (RQLRARLLALETLLQNQQL) is immunosuppression. A disulfide bridge connects residues Cys600 and Cys606. N-linked (GlcNAc...) asparagine; by host glycans are attached at residues Asn613, Asn619, and Asn637. Positions 633-667 (RQISNISSTIYEEIQKAQVQQEQNEKKLLELDEWA) form a coiled coil. The interval 662-683 (ELDEWASIWNWLDITKWLWYIK) is MPER; binding to GalCer. A helical transmembrane segment spans residues 685-705 (AIIIVGALVGVRVIMIVLNIV). The Cytoplasmic segment spans residues 706-863 (KNIRQGYQPL…IRQGLERSLL (158 aa)). Positions 712 to 715 (YQPL) match the YXXL motif; contains endocytosis signal motif. The Di-leucine internalization motif motif lies at 862–863 (LL).

This sequence belongs to the HIV-1 env protein family. As to quaternary structure, the mature envelope protein (Env) consists of a homotrimer of non-covalently associated gp120-gp41 heterodimers. The resulting complex protrudes from the virus surface as a spike. There seems to be as few as 10 spikes on the average virion. Interacts with host CD4, CCR5 and CXCR4. Gp120 also interacts with the C-type lectins CD209/DC-SIGN and CLEC4M/DC-SIGNR (collectively referred to as DC-SIGN(R)). Gp120 and gp41 interact with GalCer. Gp120 interacts with host ITGA4/ITGB7 complex; on CD4+ T-cells, this interaction results in rapid activation of integrin ITGAL/LFA-1, which facilitates efficient cell-to-cell spreading of HIV-1. Gp120 interacts with cell-associated heparan sulfate; this interaction increases virus infectivity on permissive cells and may be involved in infection of CD4- cells. The mature envelope protein (Env) consists of a homotrimer of non-covalently associated gp120-gp41 heterodimers. The resulting complex protrudes from the virus surface as a spike. There seems to be as few as 10 spikes on the average virion. Post-translationally, highly glycosylated by host. The high number of glycan on the protein is reffered to as 'glycan shield' because it contributes to hide protein sequence from adaptive immune system. In terms of processing, palmitoylation of the transmembrane protein and of Env polyprotein (prior to its proteolytic cleavage) is essential for their association with host cell membrane lipid rafts. Palmitoylation is therefore required for envelope trafficking to classical lipid rafts, but not for viral replication. Specific enzymatic cleavages in vivo yield mature proteins. Envelope glycoproteins are synthesized as an inactive precursor that is heavily N-glycosylated and processed likely by host cell furin in the Golgi to yield the mature SU and TM proteins. The cleavage site between SU and TM requires the minimal sequence [KR]-X-[KR]-R. About 2 of the 9 disulfide bonds of gp41 are reduced by P4HB/PDI, following binding to CD4 receptor.

It is found in the virion membrane. The protein localises to the host cell membrane. Its subcellular location is the host endosome membrane. Oligomerizes in the host endoplasmic reticulum into predominantly trimers. In a second time, gp160 transits in the host Golgi, where glycosylation is completed. The precursor is then proteolytically cleaved in the trans-Golgi and thereby activated by cellular furin or furin-like proteases to produce gp120 and gp41. Its function is as follows. Attaches the virus to the host lymphoid cell by binding to the primary receptor CD4. This interaction induces a structural rearrangement creating a high affinity binding site for a chemokine coreceptor like CXCR4 and/or CCR5. Acts as a ligand for CD209/DC-SIGN and CLEC4M/DC-SIGNR, which are respectively found on dendritic cells (DCs), and on endothelial cells of liver sinusoids and lymph node sinuses. These interactions allow capture of viral particles at mucosal surfaces by these cells and subsequent transmission to permissive cells. HIV subverts the migration properties of dendritic cells to gain access to CD4+ T-cells in lymph nodes. Virus transmission to permissive T-cells occurs either in trans (without DCs infection, through viral capture and transmission), or in cis (following DCs productive infection, through the usual CD4-gp120 interaction), thereby inducing a robust infection. In trans infection, bound virions remain infectious over days and it is proposed that they are not degraded, but protected in non-lysosomal acidic organelles within the DCs close to the cell membrane thus contributing to the viral infectious potential during DCs' migration from the periphery to the lymphoid tissues. On arrival at lymphoid tissues, intact virions recycle back to DCs' cell surface allowing virus transmission to CD4+ T-cells. In terms of biological role, acts as a class I viral fusion protein. Under the current model, the protein has at least 3 conformational states: pre-fusion native state, pre-hairpin intermediate state, and post-fusion hairpin state. During fusion of viral and target intracellular membranes, the coiled coil regions (heptad repeats) assume a trimer-of-hairpins structure, positioning the fusion peptide in close proximity to the C-terminal region of the ectodomain. The formation of this structure appears to drive apposition and subsequent fusion of viral and target cell membranes. Complete fusion occurs in host cell endosomes and is dynamin-dependent, however some lipid transfer might occur at the plasma membrane. The virus undergoes clathrin-dependent internalization long before endosomal fusion, thus minimizing the surface exposure of conserved viral epitopes during fusion and reducing the efficacy of inhibitors targeting these epitopes. Membranes fusion leads to delivery of the nucleocapsid into the cytoplasm. This chain is Envelope glycoprotein gp160, found in Human immunodeficiency virus type 1 group O (isolate ANT70) (HIV-1).